Here is a 368-residue protein sequence, read N- to C-terminus: Quinolinate synthase (368 aa).

Residues H46 and S63 each coordinate iminosuccinate. Position 110 (C110) interacts with [4Fe-4S] cluster. Iminosuccinate contacts are provided by residues 141–143 (YVN) and S162. Position 230 (C230) interacts with [4Fe-4S] cluster. Residues 256-258 (HPE) and T273 each bind iminosuccinate. A [4Fe-4S] cluster-binding site is contributed by C320.

It belongs to the quinolinate synthase family. Type 3 subfamily. It depends on [4Fe-4S] cluster as a cofactor.

Its subcellular location is the cytoplasm. The enzyme catalyses iminosuccinate + dihydroxyacetone phosphate = quinolinate + phosphate + 2 H2O + H(+). It participates in cofactor biosynthesis; NAD(+) biosynthesis; quinolinate from iminoaspartate: step 1/1. Its function is as follows. Catalyzes the condensation of iminoaspartate with dihydroxyacetone phosphate to form quinolinate. The chain is Quinolinate synthase from Bacillus mycoides (strain KBAB4) (Bacillus weihenstephanensis).